The following is a 241-amino-acid chain: 1-Cys peroxiredoxin (241 aa).

Residues 33–189 (LRIGDVVPDF…IIRILDSFQL (157 aa)) form the Thioredoxin domain. Catalysis depends on C75, which acts as the Cysteine sulfenic acid (-SOH) intermediate.

The protein belongs to the peroxiredoxin family. Prx6 subfamily. In terms of assembly, homodimer.

It carries out the reaction a hydroperoxide + [thioredoxin]-dithiol = an alcohol + [thioredoxin]-disulfide + H2O. In terms of biological role, thiol-specific peroxidase that catalyzes the reduction of hydrogen peroxide and organic hydroperoxides to water and alcohols, respectively. Plays a role in cell protection against oxidative stress by detoxifying peroxides. The sequence is that of 1-Cys peroxiredoxin from Dictyostelium discoideum (Social amoeba).